The following is a 483-amino-acid chain: MNAIQSDLYAALPEIIILCMAMFVLLLDLFLKSHNRSLIYIFTQLGLAAAAVVTACTHNVSVVSYAFNGMFVDDPLSDVLKLMMYLTTSVMLVYTRQYVSLRDMFRGEYFALTLFALLGMMIMVSGQHFLTLYMGLELLSLCLYALVAMDRDNPRATEAAMKYFVLGALSSGMLLYGMSMLYGVTGTLDVAEVANALLQGAPDHAVLVLGVVFLIAGLGFKLGAVPFQMWVPDVYHGAPTAVTLFIGSVTKLAAFAFMIRLLIQGLYVLAIDWQGMLAIMAVLSILIGNITAIAQTNLKRMLAYSTISHVGYLLYGFMSAGTNGYVSAMFYIMAYVLMTLGGFGIMLLLSRKGFEADNLEDLKGLNQRSPWYAFLMLIIMFSMAGVPPTLGFYAKFAVLQAALQAGFVGLVIFAVVMAAIGGFYYLRVVKLMYFDEPLDNTPIKAPIDMKVLLSLNALLLLALGMFPQRLMDICAYAITHSFQ.

Transmembrane regions (helical) follow at residues 11–31 (ALPEIIILCMAMFVLLLDLFL), 37–57 (SLIYIFTQLGLAAAAVVTACT), 82–100 (LMMYLTTSVMLVYTRQYVS), 110–130 (FALTLFALLGMMIMVSGQHFL), 164–184 (FVLGALSSGMLLYGMSMLYGV), 205–225 (AVLVLGVVFLIAGLGFKLGAV), 239–259 (PTAVTLFIGSVTKLAAFAFMI), 268–288 (VLAIDWQGMLAIMAVLSILIG), 301–321 (MLAYSTISHVGYLLYGFMSAG), 329–349 (MFYIMAYVLMTLGGFGIMLLL), 372–392 (YAFLMLIIMFSMAGVPPTLGF), 406–426 (GFVGLVIFAVVMAAIGGFYYL), and 446–466 (PIDMKVLLSLNALLLLALGMF).

Belongs to the complex I subunit 2 family. In terms of assembly, NDH-1 is composed of 14 different subunits. Subunits NuoA, H, J, K, L, M, N constitute the membrane sector of the complex.

The protein localises to the cell inner membrane. The enzyme catalyses a quinone + NADH + 5 H(+)(in) = a quinol + NAD(+) + 4 H(+)(out). NDH-1 shuttles electrons from NADH, via FMN and iron-sulfur (Fe-S) centers, to quinones in the respiratory chain. The immediate electron acceptor for the enzyme in this species is believed to be ubiquinone. Couples the redox reaction to proton translocation (for every two electrons transferred, four hydrogen ions are translocated across the cytoplasmic membrane), and thus conserves the redox energy in a proton gradient. This is NADH-quinone oxidoreductase subunit N from Methylovorus glucosotrophus (strain SIP3-4).